Reading from the N-terminus, the 469-residue chain is MITEGAQAPRLLLPPLLLLLTLPATGSDPVLCFTRYEESSGKCKGLLGGGVSVKDCCLNTASAYQERSGGLCQPCRSPRWSLWSTWAPCSVTCSEGSQLRYRRCVGWNGQCSEKVALGTLEWQLQACEDQQCCPEMGGWSGWGPWEPCSVTCSKGTRTRRRACNHPAPKCGGHCPGQAQESEACDTQQSCPTHGAWAAWGPWTPCSGSCHSGTHEPKETRSRKCSAPEPSQKPPGKPCPGLAYEQRRCTGLPPCPVAGSWGPWGPVSPCPVTCGLGQTMEQRTCDHPVPQHGGPFCAGDATRTHICNTAVPCPVDGEWDSWGEWSTCVRRNMKSISCQEIPGQQSRWRTCKGRKFDGHRCAGQQQDIRHCYSIQHCPLKGSWSEWSTWGLCIPPCGPNPTRARQRLCTPLLPKYPPTVSMVEGQGEKNVTFWGRPLPRCEELQGQKLVVEEKRPCLHVPACKDPEEEKL.

Positions 1–27 (MITEGAQAPRLLLPPLLLLLTLPATGS) are cleaved as a signal peptide. 7 TSP type-1 domains span residues 28–76 (DPVL…QPCR), 77–134 (SPRW…QCCP), 136–191 (MGGW…QSCP), 193–255 (HGAW…PPCP), 257–313 (AGSW…VPCP), 315–377 (DGEW…QHCP), and 379–462 (KGSW…PACK). Disulfide bonds link Cys-32–Cys-56, Cys-43–Cys-72, and Cys-57–Cys-75. 2 C-linked (Man) tryptophan glycosylation sites follow: Trp-83 and Trp-86. Cystine bridges form between Cys-89–Cys-127, Cys-93–Cys-133, Cys-104–Cys-111, Cys-132–Cys-170, Cys-148–Cys-184, Cys-152–Cys-190, and Cys-163–Cys-174. Trp-139, Trp-142, and Trp-145 each carry a C-linked (Man) tryptophan glycan. Thr-151 carries O-linked (Fuc...) threonine glycosylation. 3 C-linked (Man) tryptophan glycosylation sites follow: Trp-196, Trp-199, and Trp-202. 3 cysteine pairs are disulfide-bonded: Cys-205/Cys-248, Cys-209/Cys-254, and Cys-224/Cys-238. Ser-208 is a glycosylation site (O-linked (Fuc...) serine). Residues 218–238 (ETRSRKCSAPEPSQKPPGKPC) are disordered. C-linked (Man) tryptophan glycosylation is found at Trp-260 and Trp-263. Cystine bridges form between Cys-269/Cys-306, Cys-273/Cys-312, and Cys-284/Cys-296. Residue Thr-272 is glycosylated (O-linked (Fuc...) threonine). Trp-321 and Trp-324 each carry a C-linked (Man) tryptophan glycan. 3 disulfides stabilise this stretch: Cys-327–Cys-370, Cys-337–Cys-376, and Cys-350–Cys-360. The interval 351 to 359 (KGRKFDGHR) is interaction with Complement C3 beta chain. C-linked (Man) tryptophan glycans are attached at residues Trp-382, Trp-385, and Trp-388. Disulfide bonds link Cys-391–Cys-455, Cys-395–Cys-461, and Cys-407–Cys-439. N-linked (GlcNAc...) asparagine glycosylation occurs at Asn-428.

In plasma, properdin exists as dimers, trimers or tetramers in the relative proportions of 26:54:20. Interacts with the pro-C3-convertase enzyme complex (C3b-Bb) comprised of Complement C3 beta chain (C3b) and the Complement factor B Bb fragment (Bb), where it binds (via its TSP type-1 5 domain) with C3b and Bb. This interaction stabilizes the complex and allows it to become the active C3-convertase enzyme complex (C3b-Bb-FP). Interacts with C3b. Interacts with CFB.

The protein resides in the secreted. In terms of biological role, a positive regulator of the alternate pathway of complement. It binds to and stabilizes the C3- and C5-convertase enzyme complexes. Inhibits CFI-CFH mediated degradation of Inhibits CFI-CFH mediated degradation of Complement C3 beta chain (C3b). This Pongo abelii (Sumatran orangutan) protein is Properdin (CFP).